Here is a 686-residue protein sequence, read N- to C-terminus: Polyribonucleotide nucleotidyltransferase (686 aa).

Mg(2+)-binding residues include aspartate 478 and aspartate 484. The 60-residue stretch at 545–604 (PRVEVIQIPTDKIGLLIGPGGKTINALQDEYGVNISVENDGTVYVAGVEGMSVKAAVSAI) folds into the KH domain. The region spanning 614–684 (GDIYVGKVVK…KQNRISLEMV (71 aa)) is the S1 motif domain.

The protein belongs to the polyribonucleotide nucleotidyltransferase family. Requires Mg(2+) as cofactor.

Its subcellular location is the cytoplasm. The enzyme catalyses RNA(n+1) + phosphate = RNA(n) + a ribonucleoside 5'-diphosphate. Functionally, involved in mRNA degradation. Catalyzes the phosphorolysis of single-stranded polyribonucleotides processively in the 3'- to 5'-direction. This is Polyribonucleotide nucleotidyltransferase from Rubrobacter xylanophilus (strain DSM 9941 / JCM 11954 / NBRC 16129 / PRD-1).